A 190-amino-acid polypeptide reads, in one-letter code: Imidazoleglycerol-phosphate dehydratase (190 aa).

It belongs to the imidazoleglycerol-phosphate dehydratase family.

Its subcellular location is the cytoplasm. The catalysed reaction is D-erythro-1-(imidazol-4-yl)glycerol 3-phosphate = 3-(imidazol-4-yl)-2-oxopropyl phosphate + H2O. It participates in amino-acid biosynthesis; L-histidine biosynthesis; L-histidine from 5-phospho-alpha-D-ribose 1-diphosphate: step 6/9. This is Imidazoleglycerol-phosphate dehydratase from Aliarcobacter butzleri (strain RM4018) (Arcobacter butzleri).